Consider the following 601-residue polypeptide: Elongation factor 4 (601 aa).

The 183-residue stretch at 6–188 (EHIRNFSIIA…EIVRKIPAPE (183 aa)) folds into the tr-type G domain. GTP-binding positions include 18–23 (DHGKST) and 135–138 (NKID).

It belongs to the TRAFAC class translation factor GTPase superfamily. Classic translation factor GTPase family. LepA subfamily.

It localises to the cell inner membrane. It catalyses the reaction GTP + H2O = GDP + phosphate + H(+). Required for accurate and efficient protein synthesis under certain stress conditions. May act as a fidelity factor of the translation reaction, by catalyzing a one-codon backward translocation of tRNAs on improperly translocated ribosomes. Back-translocation proceeds from a post-translocation (POST) complex to a pre-translocation (PRE) complex, thus giving elongation factor G a second chance to translocate the tRNAs correctly. Binds to ribosomes in a GTP-dependent manner. The polypeptide is Elongation factor 4 (Hydrogenovibrio crunogenus (strain DSM 25203 / XCL-2) (Thiomicrospira crunogena)).